Reading from the N-terminus, the 206-residue chain is MAKGLIGKKVGMSQIFDEQGNIIPVTVLEVGPCAVSQVKSVENDGYEAIQLAFQDIKEIQTSKAEKNHLAKAGLGPKKVLKEFRSFGDSPTAGSVLKIQDVFAVSDVVKVTGVSKGRGYQGVVKRHGHAGGPGAHGSRFHRHPGSMGANSTPSRVFKGVKLPGRTGSQKTTVRNLKVVRINEEKNLLFVSGAVPGTANTVITIEKI.

A disordered region spans residues 126-155 (HGHAGGPGAHGSRFHRHPGSMGANSTPSRV).

It belongs to the universal ribosomal protein uL3 family. As to quaternary structure, part of the 50S ribosomal subunit. Forms a cluster with proteins L14 and L19.

Its function is as follows. One of the primary rRNA binding proteins, it binds directly near the 3'-end of the 23S rRNA, where it nucleates assembly of the 50S subunit. The sequence is that of Large ribosomal subunit protein uL3 from Leptospira interrogans serogroup Icterohaemorrhagiae serovar copenhageni (strain Fiocruz L1-130).